A 99-amino-acid chain; its full sequence is 10 kDa heat shock protein, mitochondrial (99 aa).

Belongs to the GroES chaperonin family. In terms of assembly, homoheptamer arranged in a ring structure. 2 heptameric Hsp10 rings interact with a Hsp60 tetradecamer in the structure of a back-to-back double heptameric ring to form the symmetrical football complex.

The protein localises to the mitochondrion matrix. In terms of biological role, co-chaperonin implicated in mitochondrial protein import and macromolecular assembly. Together with Hsp60, facilitates the correct folding of imported proteins. May also prevent misfolding and promote the refolding and proper assembly of unfolded polypeptides generated under stress conditions in the mitochondrial matrix. The functional units of these chaperonins consist of heptameric rings of the large subunit Hsp60, which function as a back-to-back double ring. In a cyclic reaction, Hsp60 ring complexes bind one unfolded substrate protein per ring, followed by the binding of ATP and association with 2 heptameric rings of the co-chaperonin Hsp10. This leads to sequestration of the substrate protein in the inner cavity of Hsp60 where, for a certain period of time, it can fold undisturbed by other cell components. Synchronous hydrolysis of ATP in all Hsp60 subunits results in the dissociation of the chaperonin rings and the release of ADP and the folded substrate protein. This is 10 kDa heat shock protein, mitochondrial (hspe1) from Oryzias latipes (Japanese rice fish).